A 195-amino-acid chain; its full sequence is RFKKIRRLGALPGLTSKRPRSGSDLKNQLRSGKRSQYRIRLEEKQKLRFHYGLTELQLLKYVHIAGKAKGSTGQILLQLLEMRLDNILFRLGMASTIPGARQLVNHRHILVNGRIVDIPSYRCKPRDIITTKNKQRSKALIQNFIASSPHQEELPNHLTIDPFQYKGLVNQIIDSKWIGLKINELLVVEYYSRQT.

The S4 RNA-binding domain occupies 82–143; the sequence is MRLDNILFRL…KQRSKALIQN (62 aa).

This sequence belongs to the universal ribosomal protein uS4 family. As to quaternary structure, part of the 30S ribosomal subunit. Contacts protein S5. The interaction surface between S4 and S5 is involved in control of translational fidelity.

It is found in the plastid. The protein localises to the chloroplast. Its function is as follows. One of the primary rRNA binding proteins, it binds directly to 16S rRNA where it nucleates assembly of the body of the 30S subunit. Functionally, with S5 and S12 plays an important role in translational accuracy. The sequence is that of Small ribosomal subunit protein uS4c (rps4) from Watsonia angusta.